A 1488-amino-acid polypeptide reads, in one-letter code: MIERGKFRSLTLINWNGFFARTFDLDELVTTLSGGNGAGKSTTMAAFVTALIPDLTLLHFRNTTEAGATSGSRDKGLHGKLKAGVCYSMLDTINSRHQRVVVGVRLQQVAGRDRKVDIKPFAIQGLPMSVQPTQLVTETLNERQARVLSLAELKDKLDEMEGVQFKQFNSITDYHSLMFDLGIIARRLRSASDRSKFYRLIEASLYGGISSAITRSLRDYLLPENSGVRKAFQDMEAALRENRLTLEAIRVTQSDRDLFKHLISEATDYVAADYMRHANERRVHLDQALAFRRELYTSRKQLAAEQYKHVDMARELGEHNGAEGSLEADYQAASDHLNLVQTALRQQEKIERYEADLEELQIRFEEQNEVVAEAAEMQDENEARAEAAELEVDELKSQLADYQQALDVQQTRAIQYNQAISALARAKELCHLPDLTPESAAEWLDTFQAKEQEATEKLLSLEQKMSVAQTAHSQFEQAYQLVAAINGPLARSEAWDVARELLRDGVNQRHLAEQVQPLRMRLSELEQRLREQQEAERLLAEFCKRQGKNFDIDELEALHQELEARIASLSESVSSASEQRMALRQEQEQLQSRIQHLMQRAPVWLAAQNSLNQLSEQCGEEFTSSQEVTEYLQQLLEREREAIVERDEVGARKNAVDEEIERLSQPGGAEDQRLNALAERFGGVLLSEIYDDVSLEDAPYFSALYGPSRHAIVVPDLSQIAEQLEGLTDCPEDLYLIEGDPQSFDDSVFSVDELEKAVVVKIADRQWRYSRFPSLPIFGRAARENRIESLHAEREVLSERFATLSFDVQKTQRLHQAFSRFIGSHLSVAFEDDPEAEIRRLNGRRVELERALATHESDNQQQRLQFEQAKEGVSALNRLLPRLNLLADETLADRVDEIQERLDEAQEAARFVQQYGNQLAKLEPMVSVLQSDPEQFEQLKEDYAWSQQMQRDARQQAFALAEVVERRAHFSYSDSAEMLSGNSDLNEKLRQRLEQAEAERTRAREALRSHAAQLSQYSQVLASLKSSYDTKKELLNDLQRELQDIGVRADSGAEERARQRRDELHAQLSNNRSRRNQLEKALTFCEAEMENLTRKLRKLERDYHEMREQVVTAKAGWCAVMRMVKDNGVERRLHRRELAYLSADELRSMSDKALGALRLAVADNEHLRDVLRLSEDPKRPERKIQFFVAVYQHLRERIRQDIIRTDDPVEAIEQMEIELSRLTEELTSREQKLAISSRSVANIIRKTIQREQNRIRMLNQGLQSVSFGQVNSVRLNVNVRETHATLLDVLSEQQEQHQDLFNSNRLTFSEALAKLYQRLNPQIDMGQRTPQTIGEELLDYRNYLEMEVEVNRGSDGWLRAESGALSTGEAIGTGMSILVMVVQSWEDEARRLRGKDISPCRLLFLDEAARLDARSIATLFELCERLQMQLIIAAPENISPEKGTTYKLVRKVFQNTEHVHVVGLRGFAPQLPETLPGTQAEDTPSEAS.

34 to 41 (GGNGAGKS) is an ATP binding site. Coiled coils occupy residues 326–418 (LEAD…QYNQ), 444–472 (LDTF…QTAH), and 509–602 (RHLA…QRAP). The tract at residues 666–783 (PGGAEDQRLN…SLPIFGRAAR (118 aa)) is flexible hinge. 3 coiled-coil regions span residues 835 to 923 (EAEI…AKLE), 977 to 1116 (EMLS…AKAG), and 1209 to 1265 (VEAI…LQSV). Positions 1049–1074 (ADSGAEERARQRRDELHAQLSNNRSR) are disordered. The segment covering 1051–1065 (SGAEERARQRRDELH) has biased composition (basic and acidic residues).

This sequence belongs to the SMC family. MukB subfamily. As to quaternary structure, homodimerization via its hinge domain. Binds to DNA via its C-terminal region. Interacts, and probably forms a ternary complex, with MukE and MukF via its C-terminal region. The complex formation is stimulated by calcium or magnesium. Interacts with tubulin-related protein FtsZ.

The protein resides in the cytoplasm. It is found in the nucleoid. In terms of biological role, plays a central role in chromosome condensation, segregation and cell cycle progression. Functions as a homodimer, which is essential for chromosome partition. Involved in negative DNA supercoiling in vivo, and by this means organize and compact chromosomes. May achieve or facilitate chromosome segregation by condensation DNA from both sides of a centrally located replisome during cell division. The sequence is that of Chromosome partition protein MukB from Salmonella typhi.